The primary structure comprises 400 residues: Argininosuccinate synthase (400 aa).

ATP is bound at residue 9–17 (AYSGGLDTS). Position 87 (Tyr87) interacts with L-citrulline. Gly117 is an ATP binding site. The L-aspartate site is built by Thr119, Asn123, and Asp124. Asn123 is an L-citrulline binding site. L-citrulline contacts are provided by Arg127, Ser176, Ser185, Glu261, and Tyr273.

The protein belongs to the argininosuccinate synthase family. Type 1 subfamily. Homotetramer.

It is found in the cytoplasm. It carries out the reaction L-citrulline + L-aspartate + ATP = 2-(N(omega)-L-arginino)succinate + AMP + diphosphate + H(+). The protein operates within amino-acid biosynthesis; L-arginine biosynthesis; L-arginine from L-ornithine and carbamoyl phosphate: step 2/3. The chain is Argininosuccinate synthase from Pelodictyon phaeoclathratiforme (strain DSM 5477 / BU-1).